The chain runs to 172 residues: Ribosome maturation factor RimM (172 aa).

The 74-residue stretch at 95–168 (DDGEFYYHEI…RVDVEILEGL (74 aa)) folds into the PRC barrel domain.

The protein belongs to the RimM family. As to quaternary structure, binds ribosomal protein uS19.

Its subcellular location is the cytoplasm. In terms of biological role, an accessory protein needed during the final step in the assembly of 30S ribosomal subunit, possibly for assembly of the head region. Essential for efficient processing of 16S rRNA. May be needed both before and after RbfA during the maturation of 16S rRNA. It has affinity for free ribosomal 30S subunits but not for 70S ribosomes. The polypeptide is Ribosome maturation factor RimM (Streptococcus pneumoniae (strain P1031)).